We begin with the raw amino-acid sequence, 779 residues long: Neutral ceramidase 1 (779 aa).

Catalysis depends on serine 350, which acts as the Nucleophile. 3 N-linked (GlcNAc...) asparagine glycosylation sites follow: asparagine 368, asparagine 432, and asparagine 667.

It belongs to the neutral ceramidase family. Mostly expressed in stems, leaves, roots and siliques, and, to a lower extent, in flowers.

Its subcellular location is the secreted. The protein resides in the endoplasmic reticulum. The protein localises to the golgi apparatus. It catalyses the reaction an N-acylsphing-4-enine + H2O = sphing-4-enine + a fatty acid. Its function is as follows. Hydrolyzes the sphingolipid ceramide into sphingosine and free fatty acid. Regulates sphingolipid homeostasis. Promotes oxidative stress resistance. The polypeptide is Neutral ceramidase 1 (Arabidopsis thaliana (Mouse-ear cress)).